The following is a 223-amino-acid chain: Deoxyribose-phosphate aldolase (223 aa).

Residue aspartate 89 is the Proton donor/acceptor of the active site. Catalysis depends on lysine 152, which acts as the Schiff-base intermediate with acetaldehyde. The active-site Proton donor/acceptor is lysine 181.

The protein belongs to the DeoC/FbaB aldolase family. DeoC type 1 subfamily.

The protein resides in the cytoplasm. It carries out the reaction 2-deoxy-D-ribose 5-phosphate = D-glyceraldehyde 3-phosphate + acetaldehyde. Its pathway is carbohydrate degradation; 2-deoxy-D-ribose 1-phosphate degradation; D-glyceraldehyde 3-phosphate and acetaldehyde from 2-deoxy-alpha-D-ribose 1-phosphate: step 2/2. Functionally, catalyzes a reversible aldol reaction between acetaldehyde and D-glyceraldehyde 3-phosphate to generate 2-deoxy-D-ribose 5-phosphate. The protein is Deoxyribose-phosphate aldolase of Listeria monocytogenes serotype 4a (strain HCC23).